The following is a 62-amino-acid chain: Conotoxin reg3.5 (62 aa).

A signal peptide spans 1 to 22 (MMFKLGVLLTICLLLFPLTGTA). The propeptide occupies 23–49 (LDGDQLAEHMLDISSGINDRWFDPVRK). 3 cysteine pairs are disulfide-bonded: cysteine 50-cysteine 60, cysteine 51-cysteine 58, and cysteine 56-cysteine 61.

It belongs to the conotoxin M superfamily. Expressed by the venom duct.

Its subcellular location is the secreted. The chain is Conotoxin reg3.5 from Conus regius (Crown cone).